Reading from the N-terminus, the 450-residue chain is Probable ECA polymerase (450 aa).

Helical transmembrane passes span phenylalanine 6–phenylalanine 26, valine 37–leucine 57, valine 63–alanine 83, valine 118–leucine 138, glycine 155–leucine 175, alanine 181–glycine 201, isoleucine 207–tryptophan 227, methionine 228–tyrosine 248, leucine 341–isoleucine 361, tyrosine 378–alanine 398, and valine 410–phenylalanine 430.

This sequence belongs to the WzyE family. Probably part of a complex composed of WzxE, WzyE and WzzE.

Its subcellular location is the cell inner membrane. Its pathway is bacterial outer membrane biogenesis; enterobacterial common antigen biosynthesis. In terms of biological role, probably involved in the polymerization of enterobacterial common antigen (ECA) trisaccharide repeat units. The polypeptide is Probable ECA polymerase (Shigella sonnei (strain Ss046)).